A 437-amino-acid polypeptide reads, in one-letter code: GTPase Der (437 aa).

2 consecutive EngA-type G domains span residues 3-168 (PLIA…PETE) and 178-353 (IQLA…QNRS). Residues 9-16 (GRPNVGKS), 56-60 (DTGGY), 120-123 (NKVE), 184-191 (GRPNVGKS), 231-235 (DTAGL), and 296-299 (NKWD) contribute to the GTP site. The KH-like domain occupies 354–437 (RKISTSVLNK…VPISMRFMQK (84 aa)).

This sequence belongs to the TRAFAC class TrmE-Era-EngA-EngB-Septin-like GTPase superfamily. EngA (Der) GTPase family. As to quaternary structure, associates with the 50S ribosomal subunit.

GTPase that plays an essential role in the late steps of ribosome biogenesis. The chain is GTPase Der from Pelodictyon phaeoclathratiforme (strain DSM 5477 / BU-1).